The chain runs to 169 residues: MSLRGRFYYCRHFRGRKQARRVGELPEVTELVSGPDWNPNTSQPMPGSPAPAPRRLPGCQRHPHPFKCCPVPAPQSLPSTTRPHLPPTPQGQASRWLFLFLFQKLRGETDVCVPDACRWRRRSRETRGENQSVRAAVRSPDQAFHALVSGSRGREGRLRPQCAGSAGGA.

Disordered stretches follow at residues 32-53 and 148-169; these read VSGP…APAP and VSGS…AGGA.

This is an uncharacterized protein from Homo sapiens (Human).